A 32-amino-acid chain; its full sequence is Enhancer of rudimentary homolog (32 aa).

Belongs to the E(R) family. As to quaternary structure, homodimer. Component of the methylosome, a 20S complex containing at least CLNS1A/pICln, PRMT5/SKB1, WDR77/MEP50, PRMT1 and ERH. Interacts with CHTOP.

It is found in the nucleus. Functionally, may have a role in the cell cycle. In terms of biological role, AP 3910 has antibacterial activity against B.megaterium. The chain is Enhancer of rudimentary homolog (ERH) from Sus scrofa (Pig).